The primary structure comprises 161 residues: Putative 2'-deoxynucleoside 5'-phosphate N-hydrolase 1 (161 aa).

Substrate-binding positions include 27-33 (FLSGSIR), Tyr-42, His-60, Glu-106, and 128-130 (SSM).

This sequence belongs to the 2'-deoxynucleoside 5'-phosphate N-hydrolase 1 family. Monomer and homodimer.

It catalyses the reaction a pyrimidine 2'-deoxyribonucleoside 5'-phosphate + H2O = a pyrimidine nucleobase + 2-deoxy-D-ribose 5-phosphate. The catalysed reaction is a purine 2'-deoxyribonucleoside 5'-phosphate + H2O = a purine nucleobase + 2-deoxy-D-ribose 5-phosphate. Catalyzes the cleavage of the N-glycosidic bond of deoxyribonucleoside 5'-monophosphates to yield deoxyribose 5-phosphate and a purine or pyrimidine base. In Methanosarcina mazei (strain ATCC BAA-159 / DSM 3647 / Goe1 / Go1 / JCM 11833 / OCM 88) (Methanosarcina frisia), this protein is Putative 2'-deoxynucleoside 5'-phosphate N-hydrolase 1.